Reading from the N-terminus, the 359-residue chain is Probable dual-specificity RNA methyltransferase RlmN (359 aa).

Glu-99 serves as the catalytic Proton acceptor. The 238-residue stretch at 105–342 (TENRRTACVS…VTIRKSYGTT (238 aa)) folds into the Radical SAM core domain. A disulfide bridge connects residues Cys-112 and Cys-347. Residues Cys-119, Cys-123, and Cys-126 each coordinate [4Fe-4S] cluster. Residues 171-172 (GE), Ser-204, 227-229 (SLH), and Asn-304 contribute to the S-adenosyl-L-methionine site. Cys-347 functions as the S-methylcysteine intermediate in the catalytic mechanism.

It belongs to the radical SAM superfamily. RlmN family. The cofactor is [4Fe-4S] cluster.

The protein localises to the cytoplasm. The enzyme catalyses adenosine(2503) in 23S rRNA + 2 reduced [2Fe-2S]-[ferredoxin] + 2 S-adenosyl-L-methionine = 2-methyladenosine(2503) in 23S rRNA + 5'-deoxyadenosine + L-methionine + 2 oxidized [2Fe-2S]-[ferredoxin] + S-adenosyl-L-homocysteine. The catalysed reaction is adenosine(37) in tRNA + 2 reduced [2Fe-2S]-[ferredoxin] + 2 S-adenosyl-L-methionine = 2-methyladenosine(37) in tRNA + 5'-deoxyadenosine + L-methionine + 2 oxidized [2Fe-2S]-[ferredoxin] + S-adenosyl-L-homocysteine. Specifically methylates position 2 of adenine 2503 in 23S rRNA and position 2 of adenine 37 in tRNAs. This Pelodictyon phaeoclathratiforme (strain DSM 5477 / BU-1) protein is Probable dual-specificity RNA methyltransferase RlmN.